A 154-amino-acid chain; its full sequence is Endoribonuclease YbeY (154 aa).

Zn(2+)-binding residues include H113, H117, and H123.

Belongs to the endoribonuclease YbeY family. Requires Zn(2+) as cofactor.

It is found in the cytoplasm. Functionally, single strand-specific metallo-endoribonuclease involved in late-stage 70S ribosome quality control and in maturation of the 3' terminus of the 16S rRNA. The polypeptide is Endoribonuclease YbeY (Vibrio parahaemolyticus serotype O3:K6 (strain RIMD 2210633)).